A 116-amino-acid polypeptide reads, in one-letter code: Ribonuclease P protein component (116 aa).

The protein belongs to the RnpA family. As to quaternary structure, consists of a catalytic RNA component (M1 or rnpB) and a protein subunit.

The catalysed reaction is Endonucleolytic cleavage of RNA, removing 5'-extranucleotides from tRNA precursor.. RNaseP catalyzes the removal of the 5'-leader sequence from pre-tRNA to produce the mature 5'-terminus. It can also cleave other RNA substrates such as 4.5S RNA. The protein component plays an auxiliary but essential role in vivo by binding to the 5'-leader sequence and broadening the substrate specificity of the ribozyme. The chain is Ribonuclease P protein component from Lachnoclostridium phytofermentans (strain ATCC 700394 / DSM 18823 / ISDg) (Clostridium phytofermentans).